Here is a 508-residue protein sequence, read N- to C-terminus: Protein adenylyltransferase fic-1 (508 aa).

The helical transmembrane segment at 44–64 threads the bilayer; sequence TVIIISVLVSLICQHFVPYAV. 2 TPR repeats span residues 147 to 180 and 181 to 214; these read AILA…APTN and PQIL…DPGN. An Inhibitory (S/T)XXXE(G/N) motif motif is present at residues 270-275; sequence TVAIEG. Glutamate 274 contributes to the ATP binding site. The Fido domain maps to 326–461; that stretch reads ISIDDILEMH…LRPFVRYVAK (136 aa). Threonine 352 bears the O-AMP-threonine; by autocatalysis mark. Position 357–360 (357–360) interacts with ATP; the sequence is VGRF. Residue histidine 404 is part of the active site. ATP is bound by residues 408 to 415, 440 to 441, and asparagine 448; these read DGNGRTAR and YY. Threonine 476 carries the post-translational modification O-AMP-threonine; by autocatalysis. The interval 482–508 is disordered; that stretch reads LNSGDSKLTPEESEVSEKIEAECRAGN. The span at 496-508 shows a compositional bias: basic and acidic residues; that stretch reads VSEKIEAECRAGN.

Belongs to the fic family. Forms homodimers; homodimerization might be required for adenylyltransferase activity. In terms of tissue distribution, ubiquitously expressed, with high expression in the germline.

It localises to the endoplasmic reticulum membrane. The protein localises to the nucleus membrane. The catalysed reaction is L-tyrosyl-[protein] + ATP = O-(5'-adenylyl)-L-tyrosyl-[protein] + diphosphate. It catalyses the reaction L-threonyl-[protein] + ATP = 3-O-(5'-adenylyl)-L-threonyl-[protein] + diphosphate. The enzyme catalyses 3-O-(5'-adenylyl)-L-threonyl-[protein] + H2O = L-threonyl-[protein] + AMP + H(+). The side chain of Glu-274 determines which of the two opposing activities (AMPylase or de-AMPylase) will take place. In response to endoplasmic reticulum stress, mediates de-AMPylase activity. Adenylyltransferase activity is inhibited by the inhibitory helix present at the N-terminus: Glu-274 binds ATP and competes with ATP-binding at Arg-415, thereby preventing adenylyltransferase activity. In unstressed cells, disengagement of Glu-274 promotes adenylyltransferase activity. Activation dissociates ATP-binding from Glu-274, allowing ordered binding of the entire ATP moiety with the alpha-phosphate in an orientation that is productive for accepting an incoming target hydroxyl side chain. Functionally, protein that can both mediate the addition of adenosine 5'-monophosphate (AMP) to specific residues of target proteins (AMPylation), and the removal of the same modification from target proteins (de-AMPylation), depending on the context. The side chain of Glu-274 determines which of the two opposing activities (AMPylase or de-AMPylase) will take place. Adenylyltransferase that mediates the addition of adenosine 5'-monophosphate (AMP) to specific residues of target proteins. In vivo target proteins include the heat-shock 70 family proteins hsp-1 and hsp-3 and the translation elongation factors eef-1A, eef-1G and eef-2. Can AMPylate core histone H3 in vitro. Can also act as a phosphodiesterase by mediating removal of ATP (de-AMPylation) from target proteins. Decreases susceptibility to P.aeruginosa-mediated killing and might therefore play a role in the innate immune response. The chain is Protein adenylyltransferase fic-1 from Caenorhabditis elegans.